The primary structure comprises 543 residues: MQLTLWTYEGPPHVGAMRVATALDDVHYVLHAPQGDTYADLLFTMIERLPRRPPVTYTTFQARDLGGDTAELFKTACSQAFERFRPNAMLVGASCTAELIQDDPGGLARALALPIPVVPLELPSYQRKENWGASETFYQVVRTLAGPRAPAPGTPRPAREPGAKPCCNLLGPTALGFRHRDDVREITGLLNELGIEVRTVAPLGASADDIARLGEADFNVVLYPETAQQAAGWLQRFFGQPFTKTIPIGVKATKAFIAEVLQLAGLPADTPLPDALSRSPWYSRSVDSTYLTGKRVFIFGDATHAIAAARVATEEMGFTVVGLGTYSREFARDVRDAAKHYGVEALITDDYLEVEAKVAELHPELVLGTQMERHIAKRLGVPCAVISAPVHVQDFPARYSPQMGFEGANVLFDSWVHPLMMGLEEHLLTMFRGDFEFHDGAAASHLGRAAVPPPAAAPAPAAESSDVPAVAETATAAATVAAPAASAPITVAQWAPDAQKELQKIPFFVRGKARRNTERFAAERGLATITVETLYDAKAHFGR.

Residue Asp-36 coordinates [4Fe-4S] cluster. Residue Asp-287 is the Proton donor of the active site. Gly-422–Leu-423 is a substrate binding site.

The protein belongs to the ChlB/BchB/BchZ family. As to quaternary structure, protochlorophyllide reductase is composed of three subunits; BchL, BchN and BchB. Forms a heterotetramer of two BchB and two BchN subunits. Requires [4Fe-4S] cluster as cofactor.

The enzyme catalyses chlorophyllide a + oxidized 2[4Fe-4S]-[ferredoxin] + 2 ADP + 2 phosphate = protochlorophyllide a + reduced 2[4Fe-4S]-[ferredoxin] + 2 ATP + 2 H2O. It functions in the pathway porphyrin-containing compound metabolism; bacteriochlorophyll biosynthesis (light-independent). In terms of biological role, component of the dark-operative protochlorophyllide reductase (DPOR) that uses Mg-ATP and reduced ferredoxin to reduce ring D of protochlorophyllide (Pchlide) to form chlorophyllide a (Chlide). This reaction is light-independent. The NB-protein (BchN-BchB) is the catalytic component of the complex. In Rubrivivax gelatinosus (strain NBRC 100245 / IL144), this protein is Light-independent protochlorophyllide reductase subunit B.